The following is a 190-amino-acid chain: Ubiquinol-cytochrome c reductase iron-sulfur subunit (190 aa).

A helical membrane pass occupies residues 18–39 (FLYYATAGAGTVAAGAAAWTLV). Residues 95–188 (GQLIDRSAQN…AEFLDDTTIK (94 aa)) form the Rieske domain. [2Fe-2S] cluster is bound by residues Cys-132, His-134, Cys-152, and His-155. A disulfide bridge connects residues Cys-137 and Cys-154.

Belongs to the Rieske iron-sulfur protein family. As to quaternary structure, the main subunits of complex b-c1 are: cytochrome b, cytochrome c1 and the Rieske protein. It depends on [2Fe-2S] cluster as a cofactor.

The protein localises to the cell membrane. The catalysed reaction is a quinol + 2 Fe(III)-[cytochrome c](out) = a quinone + 2 Fe(II)-[cytochrome c](out) + 2 H(+)(out). Its function is as follows. Component of the ubiquinol-cytochrome c reductase complex (complex III or cytochrome b-c1 complex), which is a respiratory chain that generates an electrochemical potential coupled to ATP synthesis. The sequence is that of Ubiquinol-cytochrome c reductase iron-sulfur subunit (petA) from Paracoccus denitrificans.